The chain runs to 314 residues: uncharacterized protein (314 aa).

This is an uncharacterized protein from Methanocaldococcus jannaschii (strain ATCC 43067 / DSM 2661 / JAL-1 / JCM 10045 / NBRC 100440) (Methanococcus jannaschii).